Reading from the N-terminus, the 265-residue chain is Polyglutamine-binding protein 1 (265 aa).

Residues 46 to 80 form the WW domain; the sequence is EGLPPSWYKVFDPSCGLPYYWNADTDLVSWLSPHD. A Phosphoserine modification is found at Ser-94. The interval 94-265 is disordered; it reads SSNADAEEKL…AEASRTKQQD (172 aa). A compositionally biased stretch (basic and acidic residues) spans 99–175; that stretch reads AEEKLDRSHD…DKADREEGKE (77 aa). 15 consecutive repeat copies span residues 104–110, 111–117, 118–124, 125–131, 132–138, 139–140, 141–142, 143–144, 150–151, 152–153, 154–155, 156–157, 158–159, 160–161, and 162–163. Residues 104 to 138 are 5 X 7 AA approximate tandem repeats of D-R-[SG]-H-D-K-S; the sequence is DRSHDKSDRGHDKSDRSHEKPDRGHDKSDRGHDKS. A 3 X 2 AA tandem repeats of [DE]-R region spans residues 139-144; the sequence is DRDRER. The 7 X 2 AA tandem repeats of [DE]-R stretch occupies residues 150–163; it reads DRERERDRERDRDR. Positions 245-255 are important for interaction with TXNL4A; the sequence is YPSPGAVLRAN. Ser-247 bears the Phosphoserine mark.

As to quaternary structure, interacts with POU3F2/Brn-2, ATXN1, TXNL4A, HTT and AR. Interaction with ATXN1 correlates positively with the length of the polyglutamine tract. Interacts with RNA polymerase II large subunit in a phosphorylation-dependent manner. Forms a ternary complex with ATXN1 mutant and phosphorylated RNA polymerase II. Interacts (via C-terminus) with TXNL4A and CD2BP2. Interacts (via WW domain) with ATN1 and SF3B1, and may interact with additional splice factors. Interacts (via WW domain) with WBP11; Leading to reduce interaction between PQBP1 and TXNL4A. Interacts with CAPRIN1. Interacts with DDX1. Interacts with SFPQ. Interacts with KHSRP.

The protein resides in the nucleus. It localises to the nucleus speckle. The protein localises to the cytoplasmic granule. In terms of biological role, intrinsically disordered protein that acts as a scaffold, and which is involved in different processes, such as pre-mRNA splicing, transcription regulation, innate immunity and neuron development. Interacts with splicing-related factors via the intrinsically disordered region and regulates alternative splicing of target pre-mRNA species. May suppress the ability of POU3F2 to transactivate the DRD1 gene in a POU3F2 dependent manner. Can activate transcription directly or via association with the transcription machinery. May be involved in ATXN1 mutant-induced cell death. The interaction with ATXN1 mutant reduces levels of phosphorylated RNA polymerase II large subunit. Involved in the assembly of cytoplasmic stress granule, possibly by participating in the transport of neuronal RNA granules. Also acts as an innate immune sensor of infection by retroviruses, by detecting the presence of reverse-transcribed DNA in the cytosol. Directly binds retroviral reverse-transcribed DNA in the cytosol and interacts with CGAS, leading to activate the cGAS-STING signaling pathway, triggering type-I interferon production. The protein is Polyglutamine-binding protein 1 (PQBP1) of Pongo pygmaeus (Bornean orangutan).